Here is a 430-residue protein sequence, read N- to C-terminus: Histidine--tRNA ligase (430 aa).

The protein belongs to the class-II aminoacyl-tRNA synthetase family. As to quaternary structure, homodimer.

It localises to the cytoplasm. It catalyses the reaction tRNA(His) + L-histidine + ATP = L-histidyl-tRNA(His) + AMP + diphosphate + H(+). The protein is Histidine--tRNA ligase of Parasynechococcus marenigrum (strain WH8102).